Reading from the N-terminus, the 179-residue chain is Large ribosomal subunit protein bL19 (179 aa).

It belongs to the bacterial ribosomal protein bL19 family.

Its function is as follows. This protein is located at the 30S-50S ribosomal subunit interface and may play a role in the structure and function of the aminoacyl-tRNA binding site. The chain is Large ribosomal subunit protein bL19 from Rhizobium johnstonii (strain DSM 114642 / LMG 32736 / 3841) (Rhizobium leguminosarum bv. viciae).